The sequence spans 401 residues: MNYDHILIRFGEISTKGKNRKSFIERLKQNIRLVLKDYPNLKYFSNRDRMTITLNGEDPEALFPHLKQVFGIQSFSLAIKCDSRLDDIKATALKAIKDQYKPGDTFKVATKRAYKQFELDTNQMNAEIGGHILRNTEGLTVDVRNPDIPLRIEIREEATFLTIRDEKGAGGLPVGSAGKAMLMLSGGFDSPVAGFYAMKRGLSVEAVHFFSPPYTSERAKQKVMDLAKCLSRFGGSMTLHIVPFTKTQELIQKQIPENYTMTATRRLMLQIADRIREKRNGLAIITGESLGQVASQTLESMYAINAVTSTPILRPLIAMDKTEIIEKSREIGTYETSIQPFEDCCTIFTPPSPKTRPKKEKIEHFESFVDFEPYIQEAVDNIETMTLYSEQEANDKFAELF.

The 106-residue stretch at Glu-60–Asp-165 folds into the THUMP domain. Residues Met-183–Leu-184, His-208–Phe-209, Arg-265, Gly-287, and Gln-296 contribute to the ATP site.

Belongs to the ThiI family.

The protein resides in the cytoplasm. It carries out the reaction [ThiI sulfur-carrier protein]-S-sulfanyl-L-cysteine + a uridine in tRNA + 2 reduced [2Fe-2S]-[ferredoxin] + ATP + H(+) = [ThiI sulfur-carrier protein]-L-cysteine + a 4-thiouridine in tRNA + 2 oxidized [2Fe-2S]-[ferredoxin] + AMP + diphosphate. The enzyme catalyses [ThiS sulfur-carrier protein]-C-terminal Gly-Gly-AMP + S-sulfanyl-L-cysteinyl-[cysteine desulfurase] + AH2 = [ThiS sulfur-carrier protein]-C-terminal-Gly-aminoethanethioate + L-cysteinyl-[cysteine desulfurase] + A + AMP + 2 H(+). It participates in cofactor biosynthesis; thiamine diphosphate biosynthesis. Functionally, catalyzes the ATP-dependent transfer of a sulfur to tRNA to produce 4-thiouridine in position 8 of tRNAs, which functions as a near-UV photosensor. Also catalyzes the transfer of sulfur to the sulfur carrier protein ThiS, forming ThiS-thiocarboxylate. This is a step in the synthesis of thiazole, in the thiamine biosynthesis pathway. The sulfur is donated as persulfide by IscS. The protein is Probable tRNA sulfurtransferase of Bacillus subtilis (strain 168).